Reading from the N-terminus, the 283-residue chain is Nicotine 6-hydroxylase medium subunit (283 aa).

The FAD-binding PCMH-type domain maps to 1–176 (MKLPAIRYAS…TDVWIPSRPN (176 aa)). FAD contacts are provided by residues 31-35 (AGGQS) and 110-114 (TLGGS).

Heterotrimer composed of a large subunit (NdhL), a medium subunit (NdhM) and a small subunit (NdhS). FAD is required as a cofactor.

It localises to the cytoplasm. The enzyme catalyses (R)-nicotine + A + H2O = (R)-6-hydroxynicotine + AH2. The catalysed reaction is (S)-nicotine + A + H2O = (S)-6-hydroxynicotine + AH2. The protein operates within alkaloid degradation; nicotine degradation; 6-hydroxypseudooxynicotine from nicotine (R-isomer route): step 1/2. It functions in the pathway alkaloid degradation; nicotine degradation; 6-hydroxypseudooxynicotine from nicotine (S-isomer route): step 1/2. Its activity is regulated as follows. Nicotine dehydrogenase activity is inhibited by tungsten. Component of the nicotine 6-hydroxylase, which is involved in the degradation of nicotine. Catalyzes the hydroxylation of the pyridine ring at C6 to form 6-hydroxynicotine. Can use both L-nicotine and D-nicotine. The sequence is that of Nicotine 6-hydroxylase medium subunit from Paenarthrobacter nicotinovorans (Arthrobacter nicotinovorans).